We begin with the raw amino-acid sequence, 208 residues long: FMN-dependent NADH:quinone oxidoreductase 1 (208 aa).

FMN contacts are provided by residues Ser-10, 15–17 (SES), and 97–100 (MWNF).

It belongs to the azoreductase type 1 family. Homodimer. Requires FMN as cofactor.

The catalysed reaction is 2 a quinone + NADH + H(+) = 2 a 1,4-benzosemiquinone + NAD(+). It carries out the reaction N,N-dimethyl-1,4-phenylenediamine + anthranilate + 2 NAD(+) = 2-(4-dimethylaminophenyl)diazenylbenzoate + 2 NADH + 2 H(+). In terms of biological role, quinone reductase that provides resistance to thiol-specific stress caused by electrophilic quinones. Functionally, also exhibits azoreductase activity. Catalyzes the reductive cleavage of the azo bond in aromatic azo compounds to the corresponding amines. The chain is FMN-dependent NADH:quinone oxidoreductase 1 from Bradyrhizobium diazoefficiens (strain JCM 10833 / BCRC 13528 / IAM 13628 / NBRC 14792 / USDA 110).